The chain runs to 318 residues: Malonyl-S-ACP:biotin-protein carboxyltransferase MADC (318 aa).

The CoA carboxyltransferase N-terminal domain occupies 2–257 (AKWTELQDKS…VLQKPMEEIE (256 aa)).

It is found in the cytoplasm. It carries out the reaction N(6)-biotinyl-L-lysyl-[protein] + malonyl-[ACP] = N(6)-carboxybiotinyl-L-lysyl-[protein] + acetyl-[ACP]. Gamma subunit of the biotin-dependent malonate decarboxylase multienzyme complex (EC 7.2.4.4). The two subunits MADC and MADD are required for the transfer of the malonate carboxy group from the acyl-carrier protein (ACP) to the prosthetic group of the biotin carrier MADF. Required for the regeneration of ACP. The chain is Malonyl-S-ACP:biotin-protein carboxyltransferase MADC (madC) from Malonomonas rubra.